Here is a 364-residue protein sequence, read N- to C-terminus: Cobalt-precorrin-5B C(1)-methyltransferase (364 aa).

The protein belongs to the CbiD family.

It carries out the reaction Co-precorrin-5B + S-adenosyl-L-methionine = Co-precorrin-6A + S-adenosyl-L-homocysteine. The protein operates within cofactor biosynthesis; adenosylcobalamin biosynthesis; cob(II)yrinate a,c-diamide from sirohydrochlorin (anaerobic route): step 6/10. Its function is as follows. Catalyzes the methylation of C-1 in cobalt-precorrin-5B to form cobalt-precorrin-6A. The polypeptide is Cobalt-precorrin-5B C(1)-methyltransferase (Thermoplasma acidophilum (strain ATCC 25905 / DSM 1728 / JCM 9062 / NBRC 15155 / AMRC-C165)).